The chain runs to 186 residues: Ribosomal RNA small subunit methyltransferase G (186 aa).

Residues G59, F64, 110–111 (IE), and R124 each bind S-adenosyl-L-methionine.

It belongs to the methyltransferase superfamily. RNA methyltransferase RsmG family.

It localises to the cytoplasm. The catalysed reaction is guanosine(527) in 16S rRNA + S-adenosyl-L-methionine = N(7)-methylguanosine(527) in 16S rRNA + S-adenosyl-L-homocysteine. Specifically methylates the N7 position of guanine in position 527 of 16S rRNA. The polypeptide is Ribosomal RNA small subunit methyltransferase G (Campylobacter curvus (strain 525.92)).